We begin with the raw amino-acid sequence, 989 residues long: MHPSTMRCMHLRPVTMHPTSRMLCWKRRLRPKGVRSPEAIRGRIQGTWRQKTVDLPAGTEICCFPSLPKAPICSTSTLMRLRSKTNAKRADFTETFESSTHGEAPAEWTTIDADGDGQGWLCLSSGQLDWLTAHGGTNVVSSFSWNGMALNPDNYLISKDVTGATKVKYYYAVNDGFPGDHYAVMISKTGTNAGDFTVVFEETPNGINKGGARFGLSTEADGAKPQSVWIERTVDLPAGTKYVAFRHYNCSDLNYILLDDIQFTMGGSPTPTDYTYTVYRDGTKIKEGLTETTFEEDGVATGNHEYCVEVKYTAGVSPKKCVNVTVNSTQFNPVKNLKAQPDGGDVVLKWEAPSAKKTEGSREVKRIGDGLFVTIEPANDVRANEAKVVLAADNVWGDNTGYQFLLDADHNTFGSVIPATGPLFTGTASSDLYSANFEYLIPANADPVVTTQNIIVTGQGEVVIPGGVYDYCITNPEPASGKMWIAGDGGNQPARYDDFTFEAGKKYTFTMRRAGMGDGTDMEVEDDSPASYTYTVYRDGTKIKEGLTETTYRDAGLSAQSHEYCVEVKYTAGVSPKVCVDYIPDGVEDVTVQKPHTLTVVGKTITVSWQGEAMIYDMNGRRLAAGRNTVVYTAQGGYYAVMVVVDGKSYVEETRYQVNLSWTRRLCADTSKHRSVIVSEYESVARPPFKEVGRLRFYAYYSNILLKQFVPKSCMKRLSYYLPHCKKGSFLRFPRSSTVITVCQFSWLEYLPVTQGVAGSSPVHTAKIRSCVEIVFRHSSIFVCYRSTGKYNYRMRLFNMLGKNFLRTKQKCLSLLRSAWDIGIKLVLFQEGRYMESPGQSDEERRTTIDFYGNGRYLLFRHSELLVENGYQVKAVVTMLGTKPMGRGHKVSPSMVKLYAQELGLPILQPDNLNEESFLDELRTYQPHLQIVVAFRMLPRSVWQMPPMGTINLHGSLLPMYRGAAPIQPRDTPWRYGKRELPPSASGMR.

2 repeats span residues 270 to 323 and 528 to 581; these read TPTD…KCVN and SPAS…VCVD. The segment at 969–989 is disordered; sequence PRDTPWRYGKRELPPSASGMR.

Belongs to the peptidase C25 family.

It is found in the cytoplasmic vesicle. In terms of biological role, cleaves human complement component C3. May enable P.gingivalis to evade complement-mediated killing during the immune response. Plays an important role in soft tissue infections and is a virulence factor. The chain is Protease PrtH (prtH) from Porphyromonas gingivalis (strain ATCC BAA-308 / W83).